A 430-amino-acid chain; its full sequence is Enolase (430 aa).

Glutamine 163 contributes to the (2R)-2-phosphoglycerate binding site. The active-site Proton donor is the glutamate 205. Aspartate 242, glutamate 287, and aspartate 314 together coordinate Mg(2+). (2R)-2-phosphoglycerate-binding residues include lysine 339, arginine 368, serine 369, and lysine 390. The active-site Proton acceptor is the lysine 339.

This sequence belongs to the enolase family. The cofactor is Mg(2+).

It is found in the cytoplasm. The protein localises to the secreted. It localises to the cell surface. The enzyme catalyses (2R)-2-phosphoglycerate = phosphoenolpyruvate + H2O. It functions in the pathway carbohydrate degradation; glycolysis; pyruvate from D-glyceraldehyde 3-phosphate: step 4/5. Functionally, catalyzes the reversible conversion of 2-phosphoglycerate (2-PG) into phosphoenolpyruvate (PEP). It is essential for the degradation of carbohydrates via glycolysis. The sequence is that of Enolase from Exiguobacterium sp. (strain ATCC BAA-1283 / AT1b).